The following is a 352-amino-acid chain: Dihydroorotate dehydrogenase (quinone) (352 aa).

FMN is bound by residues 68–72 (AGFDK) and T92. Residue K72 coordinates substrate. 117-121 (NAMGF) provides a ligand contact to substrate. FMN is bound by residues N146 and N179. N179 contributes to the substrate binding site. S182 functions as the Nucleophile in the catalytic mechanism. N184 contributes to the substrate binding site. FMN is bound by residues K215 and T243. Residue 244-245 (NT) participates in substrate binding. FMN-binding positions include G263, G292, and 313-314 (YS).

This sequence belongs to the dihydroorotate dehydrogenase family. Type 2 subfamily. In terms of assembly, monomer. FMN is required as a cofactor.

The protein localises to the cell membrane. It catalyses the reaction (S)-dihydroorotate + a quinone = orotate + a quinol. Its pathway is pyrimidine metabolism; UMP biosynthesis via de novo pathway; orotate from (S)-dihydroorotate (quinone route): step 1/1. Functionally, catalyzes the conversion of dihydroorotate to orotate with quinone as electron acceptor. This Sulfurimonas denitrificans (strain ATCC 33889 / DSM 1251) (Thiomicrospira denitrificans (strain ATCC 33889 / DSM 1251)) protein is Dihydroorotate dehydrogenase (quinone).